A 152-amino-acid polypeptide reads, in one-letter code: Small ribosomal subunit protein uS13A (152 aa).

This sequence belongs to the universal ribosomal protein uS13 family. Component of the small ribosomal subunit (SSU). Mature yeast ribosomes consist of a small (40S) and a large (60S) subunit. The 40S small subunit contains 1 molecule of ribosomal RNA (18S rRNA) and at least 33 different proteins. The large 60S subunit contains 3 rRNA molecules (25S, 5.8S and 5S rRNA) and at least 46 different proteins.

It localises to the cytoplasm. Functionally, component of the ribosome, a large ribonucleoprotein complex responsible for the synthesis of proteins in the cell. The small ribosomal subunit (SSU) binds messenger RNAs (mRNAs) and translates the encoded message by selecting cognate aminoacyl-transfer RNA (tRNA) molecules. The large subunit (LSU) contains the ribosomal catalytic site termed the peptidyl transferase center (PTC), which catalyzes the formation of peptide bonds, thereby polymerizing the amino acids delivered by tRNAs into a polypeptide chain. The nascent polypeptides leave the ribosome through a tunnel in the LSU and interact with protein factors that function in enzymatic processing, targeting, and the membrane insertion of nascent chains at the exit of the ribosomal tunnel. The sequence is that of Small ribosomal subunit protein uS13A (rps1801) from Schizosaccharomyces pombe (strain 972 / ATCC 24843) (Fission yeast).